The sequence spans 526 residues: Probable fucosyltransferase 7 (526 aa).

The Cytoplasmic portion of the chain corresponds to 1–4; the sequence is MKTK. The chain crosses the membrane as a helical; Signal-anchor for type II membrane protein span at residues 5–25; that stretch reads LMITIFSCLLLWSMLLLLSFS. The Lumenal segment spans residues 26 to 526; the sequence is NIFKHQLLGA…KLVDDTKNEL (501 aa). 3 N-linked (GlcNAc...) asparagine glycosylation sites follow: Asn211, Asn215, and Asn363.

Belongs to the glycosyltransferase 37 family. Expressed in roots, leaves, stems and seedlings.

Its subcellular location is the golgi apparatus. It localises to the golgi stack membrane. Its pathway is protein modification; protein glycosylation. Functionally, may be involved in cell wall biosynthesis. May act as a fucosyltransferase. The protein is Probable fucosyltransferase 7 (FUT7) of Arabidopsis thaliana (Mouse-ear cress).